Consider the following 372-residue polypeptide: Envelope phospholipase OPG057 (372 aa).

A YPPL motif is present at residues 153–156; the sequence is YPPL. Residues cysteine 185 and cysteine 186 are each lipidated (S-palmitoyl cysteine; by host). Residues 307–334 form the PLD phosphodiesterase domain; sequence FTIQNNTKLLIVDDEYVHITSANFDGTH.

Belongs to the orthopoxvirus OPG057 family. Interacts with protein OPG190. Post-translationally, palmitoylated. Attachment of the palmitate moiety is essential for correct intracellular targeting and protein function.

It localises to the virion membrane. It is found in the host Golgi apparatus. The protein resides in the host trans-Golgi network. Its subcellular location is the host endoplasmic reticulum membrane. It carries out the reaction a 1,2-diacyl-sn-glycero-3-phosphocholine + H2O = a 1,2-diacyl-sn-glycero-3-phosphate + choline + H(+). Its function is as follows. Major envelope protein that plays a role in the biogenesis of the viral double membrane and in egress of virus from the host cell. Produces the wrapped form of virus that is required for cell-to-cell spread. Acts as a lipase with broad specificity including phospholipase C, phospholipase A, and triacylglycerol lipase activities. This Variola virus (isolate Human/India/Ind3/1967) (VARV) protein is Envelope phospholipase OPG057 (OPG057).